A 228-amino-acid chain; its full sequence is U1 small nuclear ribonucleoprotein C (228 aa).

A Matrin-type; degenerate zinc finger spans residues 11–43; it reads ATVDYCDIFLTHDSASVRKAHNTGWKHKMQVEH. The tract at residues 83-127 is disordered; it reads GQRGQPVGGPPRPPQPFHNGGRPGPPGRPPMGMFPPQRPMMPPPH. Residues 105–127 are compositionally biased toward pro residues; sequence PGPPGRPPMGMFPPQRPMMPPPH.

The protein belongs to the U1 small nuclear ribonucleoprotein C family. U1 snRNP is composed of the 7 core Sm proteins B/B', D1, D2, D3, E, F and G that assemble in a heptameric protein ring on the Sm site of the small nuclear RNA to form the core snRNP, and at least 3 U1 snRNP-specific proteins U1-70K, U1-A and U1-C. U1-C interacts with U1 snRNA and the 5' splice-site region of the pre-mRNA.

The protein localises to the nucleus. Functionally, component of the spliceosomal U1 snRNP, which is essential for recognition of the pre-mRNA 5' splice-site and the subsequent assembly of the spliceosome. U1-C is directly involved in initial 5' splice-site recognition for both constitutive and regulated alternative splicing. The interaction with the 5' splice-site seems to precede base-pairing between the pre-mRNA and the U1 snRNA. Stimulates commitment or early (E) complex formation by stabilizing the base pairing of the 5' end of the U1 snRNA and the 5' splice-site region. The protein is U1 small nuclear ribonucleoprotein C of Batrachochytrium dendrobatidis (strain JAM81 / FGSC 10211) (Frog chytrid fungus).